We begin with the raw amino-acid sequence, 261 residues long: Glucosamine-6-phosphate deaminase (261 aa).

Catalysis depends on aspartate 67, which acts as the Proton acceptor; for enolization step. Aspartate 136 functions as the For ring-opening step in the catalytic mechanism. Histidine 138 (proton acceptor; for ring-opening step) is an active-site residue. Glutamate 143 (for ring-opening step) is an active-site residue.

The protein belongs to the glucosamine/galactosamine-6-phosphate isomerase family. NagB subfamily.

It carries out the reaction alpha-D-glucosamine 6-phosphate + H2O = beta-D-fructose 6-phosphate + NH4(+). The protein operates within amino-sugar metabolism; N-acetylneuraminate degradation; D-fructose 6-phosphate from N-acetylneuraminate: step 5/5. In terms of biological role, catalyzes the reversible isomerization-deamination of glucosamine 6-phosphate (GlcN6P) to form fructose 6-phosphate (Fru6P) and ammonium ion. In Beutenbergia cavernae (strain ATCC BAA-8 / DSM 12333 / CCUG 43141 / JCM 11478 / NBRC 16432 / NCIMB 13614 / HKI 0122), this protein is Glucosamine-6-phosphate deaminase.